A 112-amino-acid polypeptide reads, in one-letter code: Iron-sulfur cluster assembly protein CyaY (112 aa).

The protein belongs to the frataxin family.

Involved in iron-sulfur (Fe-S) cluster assembly. May act as a regulator of Fe-S biogenesis. This chain is Iron-sulfur cluster assembly protein CyaY, found in Delftia acidovorans (strain DSM 14801 / SPH-1).